Here is a 485-residue protein sequence, read N- to C-terminus: NADH-quinone oxidoreductase subunit N (485 aa).

A run of 14 helical transmembrane segments spans residues 8 to 28 (LIALLPLLIVGLTVVVVMLSI), 35 to 55 (FLNATLSVIGLNAALVSLWFV), 71 to 91 (GFAMLYTGLVLLASLATCTFA), 105 to 125 (FYLLVLIAALGGILLANANHL), 127 to 147 (SLFLGIELISLPLFGLVGYAF), 159 to 179 (YTILSAAASSFLLFGMALVYA), 203 to 223 (LLAGFGLMIVGLGFKLSLVPF), 235 to 255 (PAPVSTFLATASKIAIFGVVM), 271 to 291 (VVLAIIAFASIIFGNLMALSQ), 297 to 317 (LLGYSSISHLGYLLVALIALQ), 326 to 346 (VGVYLVGYLFSSLGAFGVVSL), 373 to 393 (AAVMTVMMLSLAGIPMTLGFI), 408 to 430 (WWLVGAVVVGSAIGLYYYLRVAV), and 455 to 475 (IVVLISALLVLVLGVWPQPLI).

It belongs to the complex I subunit 2 family. NDH-1 is composed of 13 different subunits. Subunits NuoA, H, J, K, L, M, N constitute the membrane sector of the complex.

It localises to the cell inner membrane. The enzyme catalyses a quinone + NADH + 5 H(+)(in) = a quinol + NAD(+) + 4 H(+)(out). NDH-1 shuttles electrons from NADH, via FMN and iron-sulfur (Fe-S) centers, to quinones in the respiratory chain. The immediate electron acceptor for the enzyme in this species is believed to be ubiquinone. Couples the redox reaction to proton translocation (for every two electrons transferred, four hydrogen ions are translocated across the cytoplasmic membrane), and thus conserves the redox energy in a proton gradient. This Escherichia coli O81 (strain ED1a) protein is NADH-quinone oxidoreductase subunit N.